We begin with the raw amino-acid sequence, 671 residues long: E3 ubiquitin-protein ligase pub2 (671 aa).

A C2 domain is found at 1–112 (MENIRFEVQL…KDDYKTRITL (112 aa)). A WW domain is found at 242-275 (GPLPAGWEMRLSEDYHVYFVDHSTKTTTWSDPRD). In terms of domain architecture, HECT spans 338–671 (SVSDMKKKLL…IQETAGFGTE (334 aa)). The active-site Glycyl thioester intermediate is the cysteine 639.

Interacts with the E2 ubiquitin-conjugating enzyme ubc4.

The protein localises to the membrane. Its subcellular location is the cytoplasm. It carries out the reaction S-ubiquitinyl-[E2 ubiquitin-conjugating enzyme]-L-cysteine + [acceptor protein]-L-lysine = [E2 ubiquitin-conjugating enzyme]-L-cysteine + N(6)-ubiquitinyl-[acceptor protein]-L-lysine.. Its pathway is protein modification; protein ubiquitination. E3 ubiquitin-protein ligase which accepts ubiquitin from an E2 ubiquitin-conjugating enzyme in the form of a thioester and then directly transfers the ubiquitin to targeted substrates. The sequence is that of E3 ubiquitin-protein ligase pub2 (pub2) from Schizosaccharomyces pombe (strain 972 / ATCC 24843) (Fission yeast).